A 102-amino-acid polypeptide reads, in one-letter code: Large ribosomal subunit protein bL21 (102 aa).

The protein belongs to the bacterial ribosomal protein bL21 family. As to quaternary structure, part of the 50S ribosomal subunit. Contacts protein L20.

Its function is as follows. This protein binds to 23S rRNA in the presence of protein L20. This Agathobacter rectalis (strain ATCC 33656 / DSM 3377 / JCM 17463 / KCTC 5835 / VPI 0990) (Eubacterium rectale) protein is Large ribosomal subunit protein bL21.